The chain runs to 335 residues: Phosphoserine phosphatase RsbU (335 aa).

Residues 123 to 333 (DIGAISVPAK…DDFTLIVLRR (211 aa)) enclose the PPM-type phosphatase domain.

The enzyme catalyses O-phospho-L-serine + H2O = L-serine + phosphate. The catalysed reaction is O-phospho-D-serine + H2O = D-serine + phosphate. Stimulated by a long-lived interaction with RsbT. Positive regulator of sigma-B activity. Dephosphorylates RsbV in response to environmental stress conveyed from the RsbXST module. The protein is Phosphoserine phosphatase RsbU (rsbU) of Bacillus subtilis (strain 168).